Consider the following 299-residue polypeptide: Protein LacX, chromosomal (299 aa).

This Lactococcus lactis subsp. lactis (Streptococcus lactis) protein is Protein LacX, chromosomal (lacX).